The chain runs to 686 residues: Methionine--tRNA ligase (686 aa).

The short motif at 15–25 (PYANGSIHLGH) is the 'HIGH' region element. The Zn(2+) site is built by Cys-146, Cys-149, Cys-159, and Cys-162. A 'KMSKS' region motif is present at residues 332 to 336 (KMSKS). Lys-335 serves as a coordination point for ATP. The region spanning 585–686 (AFAAVDMRIA…EGAQPGMRVM (102 aa)) is the tRNA-binding domain.

Belongs to the class-I aminoacyl-tRNA synthetase family. MetG type 1 subfamily. As to quaternary structure, homodimer. The cofactor is Zn(2+).

The protein resides in the cytoplasm. The enzyme catalyses tRNA(Met) + L-methionine + ATP = L-methionyl-tRNA(Met) + AMP + diphosphate. Its function is as follows. Is required not only for elongation of protein synthesis but also for the initiation of all mRNA translation through initiator tRNA(fMet) aminoacylation. In Vibrio campbellii (strain ATCC BAA-1116), this protein is Methionine--tRNA ligase.